Reading from the N-terminus, the 546-residue chain is Cytochrome P450 monooxygenase 219 (546 aa).

A signal peptide spans 1–22 (MATLIVLLYGLLAFGTVWLVRR). 2 N-linked (GlcNAc...) asparagine glycosylation sites follow: Asn-367 and Asn-441. Cys-487 provides a ligand contact to heme.

Belongs to the cytochrome P450 family. Heme serves as cofactor.

The protein operates within secondary metabolite biosynthesis. Cytochrome P450 monooxygenase that is able to use testosterone, anthracene, carbazole, pyrene, phenanthrene and trans-stilbene as substrates for oxidation. These multifunctional properties against a series of polycyclic aromatic hydrocarbons (PAHs) suggest that CYP219 would play important roles, at least in part, in fungal metabolic systems involved in xenobiotic detoxification. This Postia placenta (strain ATCC 44394 / Madison 698-R) (Brown rot fungus) protein is Cytochrome P450 monooxygenase 219.